The sequence spans 637 residues: GTPase-activating protein GYP1 (637 aa).

Residues 1-17 (MGVRSAAKEMHERDHNS) show a composition bias toward basic and acidic residues. Disordered regions lie at residues 1–152 (MGVR…GDRY) and 187–233 (RTLS…NDSK). Over residues 18–27 (DSSSLVTSLM) the composition is skewed to polar residues. Residues 28 to 45 (KSWRISSASSSKKPSLYK) show a composition bias toward low complexity. The span at 46–59 (MNTTESTSLPSGYA) shows a compositional bias: polar residues. S69 carries the post-translational modification Phosphoserine. Polar residues-rich tracts occupy residues 79 to 91 (QQASTRRTSNSYS) and 98 to 107 (PTLSTASNES). Basic residues predominate over residues 115 to 127 (RQHHQRHHHHQQP). Low complexity-rich tracts occupy residues 128 to 142 (RHSSSGSVGNNCSNS) and 187 to 207 (RTLSRKSTSSSINSISNMGTS). The segment covering 208 to 223 (AVRNSSSSFTYPQLPQ) has biased composition (polar residues). S250 carries the post-translational modification Phosphoserine. The Rab-GAP TBC domain occupies 280 to 508 (GIPKIHRPVV…RMWDTYLSET (229 aa)). The segment at 543 to 564 (DFQSPTTALSNMTPNNAVEDSG) is disordered.

It localises to the golgi apparatus. The protein resides in the golgi stack. In terms of biological role, GTPase-activating protein (GAP) that stimulates specifically the intrinsic GTPase activity of Ypt/Rab-type GTPases YPT1 and YPT7. Functions on the Golgi as a negative regulator of YPT1. Functions on the vacuole as a negative regulator of YPT7. It is also active on SEC4 and YPT51. Provides a catalytic arginine (arginine finger) and glutamine (glutamine finger) in trans to accelerate the GTP hydrolysis rate of the substrate GTPase. In Saccharomyces cerevisiae (strain ATCC 204508 / S288c) (Baker's yeast), this protein is GTPase-activating protein GYP1 (GYP1).